We begin with the raw amino-acid sequence, 463 residues long: Endoglucanase EG-1 (463 aa).

A signal peptide spans 1–22 (MAPSATLPLTTAILAIGRLVAA). The segment at 23–397 (QQPGTSTPEV…DIGSTTNSTG (375 aa)) is catalytic. Residues Asn-78, Asn-164, Asn-204, and Asn-208 are each glycosylated (N-linked (GlcNAc...) asparagine). The Nucleophile role is filled by Glu-218. Glu-223 (proton donor) is an active-site residue. The segment at 390-429 (GSTTNSTGGNPPPPPPPASSTTFSTTRRSSTTSSSPSCTQ) is disordered. N-linked (GlcNAc...) asparagine glycosylation is present at Asn-394. The segment at 402–427 (PPPPPASSTTFSTTRRSSTTSSSPSC) is linker. A compositionally biased stretch (low complexity) spans 408–429 (SSTTFSTTRRSSTTSSSPSCTQ). The region spanning 427–463 (CTQTHWGQCGGIGYTGCKTCTSGTTCQYGNDYYSQCL) is the CBM1 domain. Disulfide bonds link Cys-435–Cys-452 and Cys-446–Cys-462.

This sequence belongs to the glycosyl hydrolase 7 (cellulase C) family.

It localises to the secreted. It catalyses the reaction Endohydrolysis of (1-&gt;4)-beta-D-glucosidic linkages in cellulose, lichenin and cereal beta-D-glucans.. In terms of biological role, the biological conversion of cellulose to glucose generally requires three types of hydrolytic enzymes: (1) Endoglucanases which cut internal beta-1,4-glucosidic bonds; (2) Exocellobiohydrolases that cut the disaccharide cellobiose from the non-reducing end of the cellulose polymer chain; (3) Beta-1,4-glucosidases which hydrolyze the cellobiose and other short cello-oligosaccharides to glucose. The protein is Endoglucanase EG-1 (egl1) of Trichoderma longibrachiatum.